We begin with the raw amino-acid sequence, 230 residues long: Ribonuclease 3 (230 aa).

In terms of domain architecture, RNase III spans 5–125 (YSRFYNILGY…VIGAIYLDSD (121 aa)). Position 40 (Glu40) interacts with Mg(2+). The active site involves Asp44. Residues Asp111 and Glu114 each contribute to the Mg(2+) site. The active site involves Glu114. In terms of domain architecture, DRBM spans 153–223 (DSKSKLQEIL…AEKMIEMLSQ (71 aa)).

It belongs to the ribonuclease III family. In terms of assembly, homodimer. The cofactor is Mg(2+).

The protein resides in the cytoplasm. The enzyme catalyses Endonucleolytic cleavage to 5'-phosphomonoester.. In terms of biological role, digests double-stranded RNA. Involved in the processing of primary rRNA transcript to yield the immediate precursors to the large and small rRNAs (23S and 16S). Processes some mRNAs, and tRNAs when they are encoded in the rRNA operon. Processes pre-crRNA and tracrRNA of type II CRISPR loci if present in the organism. This is Ribonuclease 3 from Francisella tularensis subsp. holarctica (strain LVS).